The following is a 602-amino-acid chain: UvrABC system protein C (602 aa).

The GIY-YIG domain maps to 17-94; that stretch reads KTSGCYKMYS…IKKYKPTYNI (78 aa). Positions 199 to 234 constitute a UVR domain; sequence SKLLNDIEIKMKEVIMKENFEAAIKLKETKKSLIEI.

This sequence belongs to the UvrC family. Interacts with UvrB in an incision complex.

Its subcellular location is the cytoplasm. In terms of biological role, the UvrABC repair system catalyzes the recognition and processing of DNA lesions. UvrC both incises the 5' and 3' sides of the lesion. The N-terminal half is responsible for the 3' incision and the C-terminal half is responsible for the 5' incision. This Borrelia recurrentis (strain A1) protein is UvrABC system protein C.